Consider the following 150-residue polypeptide: uncharacterized protein (150 aa).

The segment at 49-88 (KEWAENASTDEIDDFLTHDDETERDADPSSGSGPELMNKA) is disordered. A compositionally biased stretch (basic and acidic residues) spans 63 to 75 (FLTHDDETERDAD).

This is an uncharacterized protein from Bacillus subtilis (strain 168).